The sequence spans 1488 residues: MIERGKFRSLTLINWNGFFARTFDLDELVTTLSGGNGAGKSTTMAAFVTALIPDLTLLHFRNTTEAGATSGSRDKGLHGKLKAGVCYSMLDTINSRHQRVVVGVRLQQVAGRDRKVDIKPFAIQGLPMSVQPTQLVTETLNERQARVLSLAELKDKLDEMEGVQFKQFNSITDYHSLMFDLGIIARRLRSASDRSKFYRLIEASLYGGISSAITRSLRDYLLPENSGVRKAFQDMEAALRENRLTLEAIRVTQSDRDLFKHLISEATDYVAADYMRHANERRVHLDQALAFRRDLYTSRKQLAAEQYKHVDMARELGEHNGAEGSLEADYQAASDHLNLVQTALRQQEKIERYEADLEELQIRLEEQNEVVAEAAEMQDENEARAEAAELEVDELKSQLADYQQALDVQQTRAIQYNQAISALARAKELCHLPDLTPESAAEWLDTFQAKEQEATEKLLSLEQKMSVAQTAHSQFEQAYQLVAAINGPLARSEAWDVARELLRDGVNQRHLAEQVQPLRMRLSELEQRLREQQEAERLLAEFCKRQGKNFDIDELEALHQELEARIASLSESVSSASEQRMALRQEQEQLQSRIQHLMQRAPVWLAAQNSLNQLSEQCGEEFTSSQEVTEYLQQLLEREREAIVERDEVGARKNAVDEEIERLSQPGGAEDQRLNALAERFGGVLLSEIYDDVSLEDAPYFSALYGPSRHAIVVPDLSQIAEQLEGLTDCPEDLYLIEGDPQSFDDSVFSVDELEKAVVVKIADRQWRYSRFPSLPIFGRAARENRIESLHAEREVLSERFATLSFDVQKTQRLHQAFSRFIGSHLSVAFEDDPEAEIRRLNGRRVELERALATHESDNQQQRLQFEQAKEGVSALNRLLPRLNLLADETLADRVDEIQERLDEAQEAARFVQQYGNQLAKLEPVVSVLQSDPEQFEQLKEDYAWSQQMQRDARQQAFALAEVVERRAHFSYSDSAEMLSGNSDLNEKLRQRLEQAEAERTRAREALRSHAAQLSQYSQVLASLKSSYDTKKELLNDLQRELQDIGVRADSGAEERARQRRDELHAQLSNNRSRRNQLEKALTFCEAEMENLTRKLRKLERDYHEMREQVVTAKAGWCAVMRMVKDNGVERRLHRRELAYLSADELRSMSDKALGALRLAVADNEHLRDVLRLSEDPKRPERKIQFFVAVYQHLRERIRQDIIRTDDPVEAIEQMEIELSRLTEELTSREQKLAISSRSVANIIRKTIQREQNRIRMLNQGLQSVSFGQVNSVRLNVNVRETHATLLDVLSEQQEQHQDLFNSNRLTFSEALAKLYQRLNPQIDMGQRTPQTIGEELLDYRNYLEMEVEVNRGSDGWLRAESGALSTGEAIGTGMSILVMVVQSWEDEARRLRGKDISPCRLLFLDEAARLDARSIATLFELCERLQMQLIIAAPENISPEKGTTYKLVRKVFQNTEHVHVVGLRGFAPQLPETLPGTQTEDTPSEAS.

Position 34–41 (34–41 (GGNGAGKS)) interacts with ATP. Coiled-coil stretches lie at residues 326–418 (LEAD…QYNQ), 444–472 (LDTFQAKEQEATEKLLSLEQKMSVAQTAH), and 509–602 (RHLA…QRAP). Residues 666–783 (PGGAEDQRLN…SLPIFGRAAR (118 aa)) form a flexible hinge region. Coiled coils occupy residues 835–923 (EAEI…AKLE), 977–1116 (EMLS…AKAG), and 1209–1265 (VEAI…LQSV). Residues 1049–1074 (ADSGAEERARQRRDELHAQLSNNRSR) are disordered. Over residues 1051–1065 (SGAEERARQRRDELH) the composition is skewed to basic and acidic residues.

The protein belongs to the SMC family. MukB subfamily. In terms of assembly, homodimerization via its hinge domain. Binds to DNA via its C-terminal region. Interacts, and probably forms a ternary complex, with MukE and MukF via its C-terminal region. The complex formation is stimulated by calcium or magnesium. Interacts with tubulin-related protein FtsZ.

Its subcellular location is the cytoplasm. The protein localises to the nucleoid. Plays a central role in chromosome condensation, segregation and cell cycle progression. Functions as a homodimer, which is essential for chromosome partition. Involved in negative DNA supercoiling in vivo, and by this means organize and compact chromosomes. May achieve or facilitate chromosome segregation by condensation DNA from both sides of a centrally located replisome during cell division. The sequence is that of Chromosome partition protein MukB from Salmonella typhimurium (strain LT2 / SGSC1412 / ATCC 700720).